The chain runs to 317 residues: Ribose-phosphate pyrophosphokinase (317 aa).

Residues aspartate 43–glutamate 45 and arginine 102–glutamine 103 contribute to the ATP site. Histidine 136 and aspartate 175 together coordinate Mg(2+). The active site involves lysine 198. Residues arginine 200, aspartate 224, and aspartate 228–threonine 232 contribute to the D-ribose 5-phosphate site.

It belongs to the ribose-phosphate pyrophosphokinase family. Class I subfamily. Homohexamer. Requires Mg(2+) as cofactor.

It is found in the cytoplasm. It carries out the reaction D-ribose 5-phosphate + ATP = 5-phospho-alpha-D-ribose 1-diphosphate + AMP + H(+). It functions in the pathway metabolic intermediate biosynthesis; 5-phospho-alpha-D-ribose 1-diphosphate biosynthesis; 5-phospho-alpha-D-ribose 1-diphosphate from D-ribose 5-phosphate (route I): step 1/1. Functionally, involved in the biosynthesis of the central metabolite phospho-alpha-D-ribosyl-1-pyrophosphate (PRPP) via the transfer of pyrophosphoryl group from ATP to 1-hydroxyl of ribose-5-phosphate (Rib-5-P). The polypeptide is Ribose-phosphate pyrophosphokinase (Bacillus anthracis).